The sequence spans 242 residues: Protein FsrB (242 aa).

The next 5 membrane-spanning stretches (helical) occupy residues 29–49 (LTVY…SVLF), 52–72 (LSET…AGGW), 78–95 (WLCR…PFVL), 100–120 (VSLP…LFYW), and 160–180 (KIAS…LPVT).

It belongs to the AgrB family.

It localises to the cell membrane. Its function is as follows. May be involved in the proteolytic processing of a quorum sensing system signal molecule precursor required for the regulation of the virulence genes for gelatinase (gelE) and a serine protease (sprE). This is Protein FsrB (fsrB) from Enterococcus faecalis (strain ATCC 47077 / OG1RF).